Consider the following 156-residue polypeptide: ATP synthase subunit b (156 aa).

A helical membrane pass occupies residues 7 to 27 (LFAQLVVFFILAWFTMKFVWP).

It belongs to the ATPase B chain family. F-type ATPases have 2 components, F(1) - the catalytic core - and F(0) - the membrane proton channel. F(1) has five subunits: alpha(3), beta(3), gamma(1), delta(1), epsilon(1). F(0) has four main subunits: a(1), b(2) and c(10-14). The alpha and beta chains form an alternating ring which encloses part of the gamma chain. F(1) is attached to F(0) by a central stalk formed by the gamma and epsilon chains, while a peripheral stalk is formed by the delta and b chains.

It is found in the cell inner membrane. In terms of biological role, f(1)F(0) ATP synthase produces ATP from ADP in the presence of a proton or sodium gradient. F-type ATPases consist of two structural domains, F(1) containing the extramembraneous catalytic core and F(0) containing the membrane proton channel, linked together by a central stalk and a peripheral stalk. During catalysis, ATP synthesis in the catalytic domain of F(1) is coupled via a rotary mechanism of the central stalk subunits to proton translocation. Its function is as follows. Component of the F(0) channel, it forms part of the peripheral stalk, linking F(1) to F(0). This chain is ATP synthase subunit b, found in Methylibium petroleiphilum (strain ATCC BAA-1232 / LMG 22953 / PM1).